Here is a 396-residue protein sequence, read N- to C-terminus: Lipopolysaccharide assembly protein B (396 aa).

A helical transmembrane segment spans residues 1–20 (MIELLFLLLPIAAAYGWYMG). Topologically, residues 21 to 396 (RRSAKKDQDD…IKPVSNQEHN (376 aa)) are cytoplasmic. TPR repeat units follow at residues 35 to 68 (LSRD…QEIE), 77 to 109 (FEAE…SPNY), 149 to 182 (ENAL…KPQE), and 221 to 254 (VRAS…NPDY). The Fe cation site is built by Cys364, Cys367, Cys378, and Cys381.

Belongs to the LapB family.

It localises to the cell inner membrane. Its function is as follows. Modulates cellular lipopolysaccharide (LPS) levels by regulating LpxC, which is involved in lipid A biosynthesis. May act by modulating the proteolytic activity of FtsH towards LpxC. May also coordinate assembly of proteins involved in LPS synthesis at the plasma membrane. The protein is Lipopolysaccharide assembly protein B of Haemophilus influenzae (strain ATCC 51907 / DSM 11121 / KW20 / Rd).